We begin with the raw amino-acid sequence, 88 residues long: Sec-independent protein translocase protein TatA (88 aa).

The helical transmembrane segment at 1–21 threads the bilayer; that stretch reads MNLGPTEILLILVIVVLLFGA. Over residues 46-56 the composition is skewed to basic and acidic residues; it reads SNDDQRYEEQQ. A disordered region spans residues 46 to 88; the sequence is SNDDQRYEEQQQQRQIAAQAQQQVVNPVEIPQPQPTDIQRPQQ. Residues 57-68 are compositionally biased toward low complexity; the sequence is QQRQIAAQAQQQ.

Belongs to the TatA/E family. The Tat system comprises two distinct complexes: a TatABC complex, containing multiple copies of TatA, TatB and TatC subunits, and a separate TatA complex, containing only TatA subunits. Substrates initially bind to the TatABC complex, which probably triggers association of the separate TatA complex to form the active translocon.

It is found in the cell membrane. In terms of biological role, part of the twin-arginine translocation (Tat) system that transports large folded proteins containing a characteristic twin-arginine motif in their signal peptide across membranes. TatA could form the protein-conducting channel of the Tat system. This Corynebacterium diphtheriae (strain ATCC 700971 / NCTC 13129 / Biotype gravis) protein is Sec-independent protein translocase protein TatA.